The chain runs to 230 residues: Bidirectional sugar transporter SWEET2b (230 aa).

Over 1 to 6 (MDSLYD) the chain is Extracellular. A helical transmembrane segment spans residues 7–27 (ISCFAAGLAGNIFALALFLSP). One can recognise a MtN3/slv 1 domain in the interval 13 to 98 (GLAGNIFALA…CLFIFYADSR (86 aa)). At 28 to 45 (VTTFKRILKAKSTERFDG) the chain is on the cytoplasmic side. The helical transmembrane segment at 46–66 (LPYLFSLLNCLICLWYGLPWV) threads the bilayer. Residues 67–72 (ADGRLL) lie on the Extracellular side of the membrane. A helical membrane pass occupies residues 73-93 (VATVNGIGAVFQLAYICLFIF). The Cytoplasmic portion of the chain corresponds to 94 to 103 (YADSRKTRMK). The helical transmembrane segment at 104-124 (IIGLLVLVVCGFALVSHASVF) threads the bilayer. At 125 to 137 (FFDQPLRQQFVGA) the chain is on the extracellular side. The MtN3/slv 2 domain maps to 133–217 (QFVGAVSMAS…LALYAYYSRK (85 aa)). A helical transmembrane segment spans residues 138–158 (VSMASLISMFASPLAVMGVVI). Over 159 to 167 (RSESVEFMP) the chain is Cytoplasmic. A helical transmembrane segment spans residues 168–188 (FYLSLSTFLMSASFALYGLLL). Topologically, residues 189 to 190 (RD) are extracellular. A helical transmembrane segment spans residues 191-211 (FFIYFPNGLGLILGAMQLALY). Residues 212 to 230 (AYYSRKWRGQDSSAPLLLA) lie on the Cytoplasmic side of the membrane.

The protein belongs to the SWEET sugar transporter family. Forms homooligomers and/or heterooligomers.

It is found in the cell membrane. Mediates both low-affinity uptake and efflux of sugar across the plasma membrane. The polypeptide is Bidirectional sugar transporter SWEET2b (SWEET2B) (Oryza sativa subsp. indica (Rice)).